The primary structure comprises 554 residues: Probable phospholipase D F09G2.8 (554 aa).

Residues methionine 1–proline 123 are Cytoplasmic-facing. The helical; Signal-anchor for type II membrane protein transmembrane segment at alanine 124–phenylalanine 144 threads the bilayer. The Extracellular segment spans residues asparagine 145–leucine 554. Residues asparagine 181, asparagine 208, asparagine 244, and asparagine 266 are each glycosylated (N-linked (GlcNAc...) asparagine). A PLD phosphodiesterase 1 domain is found at glycine 272 to serine 299. Active-site residues include histidine 277, lysine 279, and aspartate 284. Residues asparagine 333, asparagine 350, asparagine 468, and asparagine 513 are each glycosylated (N-linked (GlcNAc...) asparagine). One can recognise a PLD phosphodiesterase 2 domain in the interval phenylalanine 492–tyrosine 518.

It belongs to the phospholipase D family.

Its subcellular location is the membrane. It catalyses the reaction a 1,2-diacyl-sn-glycero-3-phosphocholine + H2O = a 1,2-diacyl-sn-glycero-3-phosphate + choline + H(+). The protein is Probable phospholipase D F09G2.8 of Caenorhabditis elegans.